A 141-amino-acid polypeptide reads, in one-letter code: Large ribosomal subunit protein uL11 (141 aa).

This sequence belongs to the universal ribosomal protein uL11 family. Part of the ribosomal stalk of the 50S ribosomal subunit. Interacts with L10 and the large rRNA to form the base of the stalk. L10 forms an elongated spine to which L12 dimers bind in a sequential fashion forming a multimeric L10(L12)X complex. Post-translationally, one or more lysine residues are methylated.

Functionally, forms part of the ribosomal stalk which helps the ribosome interact with GTP-bound translation factors. In Streptococcus sanguinis (strain SK36), this protein is Large ribosomal subunit protein uL11.